A 536-amino-acid chain; its full sequence is Caspase recruitment domain-containing protein 9 (536 aa).

Ser2 carries the post-translational modification Phosphoserine. Residues Asp3, Cys10, and His73 each coordinate Zn(2+). One can recognise a CARD domain in the interval 6-98 (NDDECWSVLE…QLYKKVTGKE (93 aa)). Positions 99-116 (PARVFSMIIDASGESGLT) are linker. Coiled-coil stretches lie at residues 117–277 (QLLM…DRSS) and 332–419 (LRKD…QQLE). Lys125 participates in a covalent cross-link: Glycyl lysine isopeptide (Lys-Gly) (interchain with G-Cter in ubiquitin). Phosphothreonine is present on Thr231. Residue Ser277 is modified to Phosphoserine. Residues Ser424, Ser425, Ser431, Ser450, Ser460, Ser483, and Ser498 each carry the phosphoserine modification. The tract at residues 427–536 (LEDGSPRRSQ…GSDNTDTEGS (110 aa)) is disordered. Positions 487–502 (PPEKERRRLKESFENY) are enriched in basic and acidic residues. A compositionally biased stretch (basic residues) spans 503 to 513 (RRKRALRKMQK). A phosphothreonine; by CK2 mark is found at Thr531 and Thr533.

In terms of assembly, monomer. Homodimer; homodimerization is mediated by the CARD domain which forms an extensive interaction with the adjacent linker and coiled-coil regions; leads to an autoinhibited state. Homomultimer; polymerizes following activation, forming a nucleating helical template that seeds BCL10-filament formation via a CARD-CARD interaction. Interacts (via CARD domain) with BCL10 (via CARD domain); interaction takes place following CARD9 activation and polymerization, leading to the formation of a filamentous CBM complex assembly. Component of a CBM complex (CARD9-BCL10, MALT1), composed of CARD9, BCL10 and MALT1. Interacts with RASGRF1. Interacts with NOD2 (via NACHT domain); interaction is direct. Interacts with RIPK2. Interacts with VHL; without leading to protein degradation. Post-translationally, phosphorylated at Thr-231 by PRKCD downstream of C-type lectin receptors activation: phosphorylation promotes interaction with BCL10, followed by activation of NF-kappa-B and MAP kinase p38 pathways. Phosphorylated at Thr-531 and Thr-533 by CK2 following interaction with VHL, leading to inhibit the ability to activate NF-kappa-B. Ubiquitinated at Lys-125 via 'Lys-27'-linked ubiquitin by TRIM62 downstream of C-type lectin receptors activation; leading to CARD9 activation, followed by activation of NF-kappa-B and MAP kinase p38 pathways. Deubiquitinated at Lys-125 by USP15, inhibiting CARD9. As to expression, expression is restricted to several populations of phagocytes, such as macrophages, monocytes, and dendritic cells. Highly expressed in spleen. Also detected in liver, placenta, lung, peripheral blood leukocytes and in brain.

Its subcellular location is the cytoplasm. With respect to regulation, maintained in an autoinhibited state via homodimerization in which the CARD domain forms an extensive interaction with the adjacent linker and coiled-coil regions. Activation downstream of C-type lectin receptors, by phosphorylation by PRKCD and/or ubiquitination by TRIM62, triggers disruption of the CARD domain-coiled coil interface, CARD9 homooligomerization and BCL10 recruitment, followed by activation of NF-kappa-B and MAP kinase p38 pathways. Zinc-binding inhibits activation by stabilizing the CARD ground-state conformation and restricting its capacity to form BCL10-nucleating filaments. Its function is as follows. Adapter protein that plays a key role in innate immune response against fungi by forming signaling complexes downstream of C-type lectin receptors. CARD9-mediated signals are essential for antifungal immunity against a subset of fungi from the phylum Ascomycota. Transduces signals in myeloid cells downstream of C-type lectin receptors CLEC7A (dectin-1), CLEC6A (dectin-2) and CLEC4E (Mincle), which detect pathogen-associated molecular pattern metabolites (PAMPs), such as fungal carbohydrates, and trigger CARD9 activation. Upon activation, CARD9 homooligomerizes to form a nucleating helical template that recruits BCL10 via CARD-CARD interaction, thereby promoting polymerization of BCL10 and subsequent recruitment of MALT1: this leads to activation of NF-kappa-B and MAP kinase p38 (MAPK11, MAPK12, MAPK13 and/or MAPK14) pathways which stimulate expression of genes encoding pro-inflammatory cytokines and chemokines. CARD9 signaling in antigen-presenting cells links innate sensing of fungi to the activation of adaptive immunity and provides a cytokine milieu that induces the development and subsequent of interleukin 17-producing T helper (Th17) cells. Also involved in activation of myeloid cells via classical ITAM-associated receptors and TLR: required for TLR-mediated activation of MAPK, while it is not required for TLR-induced activation of NF-kappa-B. CARD9 can also be engaged independently of BCL10: forms a complex with RASGRF1 downstream of C-type lectin receptors, which recruits and activates HRAS, leading to ERK activation and the production of cytokines. Acts as an important regulator of the intestinal commensal fungi (mycobiota) component of the gut microbiota. Plays an essential role in antifungal immunity against dissemination of gut fungi: acts by promoting induction of antifungal IgG antibodies response in CX3CR1(+) macrophages to confer protection against disseminated C.albicans or C.auris infection. Also mediates immunity against other pathogens, such as certain bacteria, viruses and parasites; CARD9 signaling is however redundant with other innate immune responses. In response to L.monocytogenes infection, required for the production of inflammatory cytokines activated by intracellular peptidoglycan: acts by connecting NOD2 recognition of peptidoglycan to downstream activation of MAP kinases (MAPK) without activating NF-kappa-B. This is Caspase recruitment domain-containing protein 9 from Homo sapiens (Human).